The primary structure comprises 466 residues: Histidine--tRNA ligase (466 aa).

The protein belongs to the class-II aminoacyl-tRNA synthetase family. As to quaternary structure, homodimer.

Its subcellular location is the cytoplasm. It carries out the reaction tRNA(His) + L-histidine + ATP = L-histidyl-tRNA(His) + AMP + diphosphate + H(+). In Xylella fastidiosa (strain M12), this protein is Histidine--tRNA ligase.